The chain runs to 291 residues: Fructose-1,6-bisphosphatase class 1 1 (291 aa).

Mg(2+)-binding residues include E78, D95, L97, and D98. Substrate contacts are provided by residues 98–101 (DGSS), Y203, and K233. E239 provides a ligand contact to Mg(2+).

The protein belongs to the FBPase class 1 family. Homotetramer. It depends on Mg(2+) as a cofactor.

The protein localises to the cytoplasm. It carries out the reaction beta-D-fructose 1,6-bisphosphate + H2O = beta-D-fructose 6-phosphate + phosphate. The protein operates within carbohydrate biosynthesis; gluconeogenesis. The sequence is that of Fructose-1,6-bisphosphatase class 1 1 from Haloarcula marismortui (strain ATCC 43049 / DSM 3752 / JCM 8966 / VKM B-1809) (Halobacterium marismortui).